The sequence spans 197 residues: dCTP deaminase (197 aa).

105-110 contacts dCTP; sequence RSSIAR. Glu133 functions as the Proton donor/acceptor in the catalytic mechanism. 2 residues coordinate dCTP: Tyr166 and Gln177. The disordered stretch occupies residues 172 to 197; the sequence is NKYAGQKDPKPSRLAEELSLEQLRGR. Residues 176 to 187 show a composition bias toward basic and acidic residues; the sequence is GQKDPKPSRLAE.

It belongs to the dCTP deaminase family. In terms of assembly, homotrimer.

The enzyme catalyses dCTP + H2O + H(+) = dUTP + NH4(+). It functions in the pathway pyrimidine metabolism; dUMP biosynthesis; dUMP from dCTP (dUTP route): step 1/2. Catalyzes the deamination of dCTP to dUTP. The polypeptide is dCTP deaminase (Thermomicrobium roseum (strain ATCC 27502 / DSM 5159 / P-2)).